We begin with the raw amino-acid sequence, 261 residues long: Pimeloyl-[acyl-carrier protein] methyl ester esterase (261 aa).

Residues 16-241 (LVLLHGWGLN…HAAHAPFISH (226 aa)) form the AB hydrolase-1 domain. Substrate contacts are provided by residues Trp22, 82 to 83 (SL), and 143 to 147 (FLALQ). Ser82 serves as the catalytic Nucleophile. Active-site residues include Asp207 and His235. Substrate is bound at residue His235.

It belongs to the AB hydrolase superfamily. Carboxylesterase BioH family. As to quaternary structure, monomer.

The protein resides in the cytoplasm. It carries out the reaction 6-carboxyhexanoyl-[ACP] methyl ester + H2O = 6-carboxyhexanoyl-[ACP] + methanol + H(+). The protein operates within cofactor biosynthesis; biotin biosynthesis. Functionally, the physiological role of BioH is to remove the methyl group introduced by BioC when the pimeloyl moiety is complete. It allows to synthesize pimeloyl-ACP via the fatty acid synthetic pathway through the hydrolysis of the ester bonds of pimeloyl-ACP esters. The sequence is that of Pimeloyl-[acyl-carrier protein] methyl ester esterase from Photorhabdus laumondii subsp. laumondii (strain DSM 15139 / CIP 105565 / TT01) (Photorhabdus luminescens subsp. laumondii).